The primary structure comprises 1226 residues: AF4/FMR2 family member 3 (1226 aa).

Positions 24–37 are enriched in basic and acidic residues; the sequence is RNALRRKERERRNQ. Disordered regions lie at residues 24–65, 116–164, 197–299, 323–496, and 523–728; these read RNAL…GDEL, SRAQ…RATQ, ERPP…GETN, KVEP…SNQY, and IKST…SINA. Residues 42–52 show a composition bias toward polar residues; the sequence is DDGTFNSSYSL. Positions 123–132 are enriched in low complexity; that stretch reads SSICSTTTST. 2 stretches are compositionally biased toward polar residues: residues 251–261 and 334–344; these read LKSSSETSVHC and KDSQLVSSGHN. A compositionally biased stretch (low complexity) spans 381–392; it reads QQAAQRTALRAL. Residues 396-408 are compositionally biased toward polar residues; the sequence is AVVQQPNCRTSVP. Low complexity predominate over residues 409–445; that stretch reads SSKGSSSSSSSGSSSSSSDSESSSGSDSETESSSSES. Positions 485–496 are enriched in polar residues; the sequence is QNESHGSESNQY. The segment covering 523-533 has biased composition (basic and acidic residues); it reads IKSTCKEEQRP. 2 stretches are compositionally biased toward low complexity: residues 550-561 and 569-579; these read PPAAVAVAVSAA and CAPAENAPAPA. A compositionally biased stretch (basic and acidic residues) spans 589–607; sequence RRTERTSAGDGANCHRPEE. Residues 668–678 show a composition bias toward low complexity; that stretch reads TESSSSSSSSD. Over residues 692 to 705 the composition is skewed to polar residues; the sequence is KAQTVAASASSGND. Ser-755 carries the phosphoserine modification. Disordered regions lie at residues 783–856, 879–964, and 1100–1138; these read PQEP…LSAN, PISP…RDCK, and AAQA…SLSN. Positions 830–842 are enriched in basic and acidic residues; the sequence is REIKKSQGEKDSS. Positions 843 to 856 are enriched in polar residues; sequence SRLATSTSNTLSAN. Ser-881 carries the post-translational modification Phosphoserine. Residues 894–909 are compositionally biased toward polar residues; it reads EDLTSSSRPNGNSLFT.

Belongs to the AF4 family. As to expression, preferentially expressed in lymphoid tissues, highest levels being found in the thymus.

It localises to the nucleus. In terms of biological role, putative transcription activator that may function in lymphoid development and oncogenesis. Binds, in vitro, to double-stranded DNA. The protein is AF4/FMR2 family member 3 of Homo sapiens (Human).